The chain runs to 356 residues: Na(+)/H(+) exchange regulatory cofactor NHE-RF1 (356 aa).

Position 2 is an N-acetylserine (S2). A phosphoserine mark is found at S2 and S46. Residues 14 to 94 (LCCLEKGPNG…AVRLLVVDPE (81 aa)) form the PDZ 1 domain. Residues 113 to 142 (AQEKSEHTEPPAAADTKKAGDQNEAEKSHL) form a disordered region. The region spanning 151–231 (LCTMKKGPNG…EAKLLVVDKE (81 aa)) is the PDZ 2 domain. A disordered region spans residues 265 to 356 (NSREALVEPA…SKKNELFSNL (92 aa)). A phosphoserine mark is found at S266, S277, S287, and S288. Positions 272-288 (EPASESPRPALARSASS) are enriched in low complexity. T290 carries the post-translational modification Phosphothreonine. Phosphoserine occurs at positions 291 and 299. Positions 307–317 (EPSSTSSSSDP) are enriched in low complexity. Basic and acidic residues predominate over residues 346-356 (WSKKNELFSNL).

Homodimer, and heterodimer with NHERF2. Binds the N-termini of EZR, RDX and MSN. Binds the C-termini of PDGFRA, PDGFRB, ADRB2, NOS2 and CFTR. Binds ARHGAP17, EPI64, RACK1, OPRK1, GNAQ, CTNNB1 and PLCB3. Binds PDZK1. Interacts with CLCN3. Binds the C-terminus of PAG1. In resting T-cells, part of a PAG1-NHERF1-MSN complex which is disrupted upon TCR activation. Forms a complex with CFTR and SLC4A7. Forms a complex with SLC4A7 and ATP6V1B1. Interacts with TRPC4 (via the PDZ-binding domain). Directly interacts with HTR4. Interacts (via the PDZ 1 domain) with PODXL (via the C-terminal PDZ-binding motif DTHL); interaction is not detected in glomerular epithelium cells. Interacts (via the PDZ 1 domain) with PODXL (via the C-terminal PDZ-binding motif DTHL); the interaction take place early in the secretory pathway and is necessary for its apical membrane sorting. Interacts with SLC26A3. Interacts with MCC. Interacts with SLC34A1. Interacts (via the PDZ domains) with SLC26A6 isoform 4 and isoform 5. Interacts (via PDZ domains) with ACE2 (via PDZ-binding motif); the interaction may enhance ACE2 membrane residence.

It localises to the cytoplasm. It is found in the apical cell membrane. The protein resides in the cell projection. The protein localises to the filopodium. Its subcellular location is the ruffle. It localises to the microvillus. It is found in the endomembrane system. Its function is as follows. Scaffold protein that connects plasma membrane proteins with members of the ezrin/moesin/radixin family and thereby helps to link them to the actin cytoskeleton and to regulate their surface expression. Necessary for recycling of internalized ADRB2. Was first known to play a role in the regulation of the activity and subcellular location of SLC9A3. Necessary for cAMP-mediated phosphorylation and inhibition of SLC9A3. Involved in sperm capacitation. May participate in the regulation of the chloride and bicarbonate homeostasis in spermatozoa. May enhance Wnt signaling. May participate in HTR4 targeting to microvilli. Involved in the regulation of phosphate reabsorption in the renal proximal tubules. The polypeptide is Na(+)/H(+) exchange regulatory cofactor NHE-RF1 (Nherf1) (Rattus norvegicus (Rat)).